The primary structure comprises 31 residues: Toxin BmKK12 (31 aa).

Glutamine 1 is subject to Pyrrolidone carboxylic acid. 3 cysteine pairs are disulfide-bonded: cysteine 4–cysteine 20, cysteine 10–cysteine 25, and cysteine 14–cysteine 27. Residue proline 31 is modified to Proline amide.

This sequence belongs to the short scorpion toxin superfamily. Potassium channel inhibitor family. Alpha-KTx 17 subfamily. In terms of processing, the N-terminus is blocked. As to expression, expressed by the venom gland.

It is found in the secreted. Blocker of potassium channels (Kv). The protein is Toxin BmKK12 of Olivierus martensii (Manchurian scorpion).